We begin with the raw amino-acid sequence, 656 residues long: PAN2-PAN3 deadenylation complex subunit pan3 (656 aa).

Disordered regions lie at residues 1–24 and 75–117; these read MAATRYNSGDLRRQVGSPRAKNRD and SFTP…QQAN. A C3H1-type zinc finger spans residues 24–53; sequence DTKETLCRNVVIYGHCRWEDSGCTFNHDQN. A PABPC-interacting motif-2 (PAM-2) motif is present at residues 63 to 83; that stretch reads NSNRRVFNVESPSFTPANQQQ. Polar residues-rich tracts occupy residues 75-96 and 107-117; these read SFTPANQQQSAGKKSTFSSQAA and GTSTPTLQQAN. Residues 251–514 are pseudokinase domain; it reads QLLPNSGLPN…TVETLLGGIT (264 aa). Residues 275-280, R302, 352-359, and 412-413 contribute to the ATP site; these read TRNSTC, DFHPLSET, and SK. Residues 515-553 are a coiled coil; sequence THLANFANFVMQESDEKEFHLMRELENGRIARLMFKLSV. The knob domain stretch occupies residues 554 to 656; that stretch reads VNERGDSCGV…SKPSATGATI (103 aa).

It belongs to the protein kinase superfamily. PAN3 family. As to quaternary structure, homodimer. Forms a heterotrimer with a catalytic subunit par-1/pan2 to form the poly(A)-nuclease (PAN) deadenylation complex. Interacts (via PAM-2 motif) with poly(A)-binding protein pabp-1 (via PABC domain), conferring substrate specificity of the enzyme complex.

The protein localises to the cytoplasm. Functionally, regulatory subunit of the poly(A)-nuclease (PAN) deadenylation complex, one of two cytoplasmic mRNA deadenylases involved in mRNA turnover. PAN specifically shortens poly(A) tails of RNA and the activity is stimulated by poly(A)-binding protein pabp-1. PAN deadenylation is followed by rapid degradation of the shortened mRNA tails by the CCR4-NOT complex. Deadenylated mRNAs are then degraded by two alternative mechanisms, namely exosome-mediated 3'-5' exonucleolytic degradation, or deadenylation-dependent mRNA decaping and subsequent 5'-3' exonucleolytic degradation by rgb-30/xrn1. May also be involved in post-transcriptional maturation of mRNA poly(A) tails. par-2/pan3 acts as a positive regulator for PAN activity, recruiting the catalytic subunit par-1/pan2 to mRNA via its interaction with RNA and with pabp-1. The protein is PAN2-PAN3 deadenylation complex subunit pan3 (par-2) of Neurospora crassa (strain ATCC 24698 / 74-OR23-1A / CBS 708.71 / DSM 1257 / FGSC 987).